The primary structure comprises 270 residues: Purine nucleoside phosphorylase BT_4389 (270 aa).

His-79, Cys-124, and His-141 together coordinate Zn(2+).

This sequence belongs to the purine nucleoside phosphorylase YfiH/LACC1 family. As to quaternary structure, homodimer. It depends on Cu(2+) as a cofactor. The cofactor is Zn(2+).

It catalyses the reaction adenosine + phosphate = alpha-D-ribose 1-phosphate + adenine. It carries out the reaction S-methyl-5'-thioadenosine + phosphate = 5-(methylsulfanyl)-alpha-D-ribose 1-phosphate + adenine. The enzyme catalyses inosine + phosphate = alpha-D-ribose 1-phosphate + hypoxanthine. The catalysed reaction is adenosine + H2O + H(+) = inosine + NH4(+). Its function is as follows. Purine nucleoside enzyme that catalyzes the phosphorolysis of adenosine and inosine nucleosides, yielding D-ribose 1-phosphate and the respective free bases, adenine and hypoxanthine. Also catalyzes the phosphorolysis of S-methyl-5'-thioadenosine into adenine and S-methyl-5-thio-alpha-D-ribose 1-phosphate. Also has adenosine deaminase activity. This is Purine nucleoside phosphorylase BT_4389 from Bacteroides thetaiotaomicron (strain ATCC 29148 / DSM 2079 / JCM 5827 / CCUG 10774 / NCTC 10582 / VPI-5482 / E50).